Here is a 299-residue protein sequence, read N- to C-terminus: ATP phosphoribosyltransferase (299 aa).

The protein belongs to the ATP phosphoribosyltransferase family. Long subfamily. As to quaternary structure, equilibrium between an active dimeric form, an inactive hexameric form and higher aggregates. Interconversion between the various forms is largely reversible and is influenced by the natural substrates and inhibitors of the enzyme. It depends on Mg(2+) as a cofactor.

Its subcellular location is the cytoplasm. The catalysed reaction is 1-(5-phospho-beta-D-ribosyl)-ATP + diphosphate = 5-phospho-alpha-D-ribose 1-diphosphate + ATP. It participates in amino-acid biosynthesis; L-histidine biosynthesis; L-histidine from 5-phospho-alpha-D-ribose 1-diphosphate: step 1/9. Its activity is regulated as follows. Feedback inhibited by histidine. In terms of biological role, catalyzes the condensation of ATP and 5-phosphoribose 1-diphosphate to form N'-(5'-phosphoribosyl)-ATP (PR-ATP). Has a crucial role in the pathway because the rate of histidine biosynthesis seems to be controlled primarily by regulation of HisG enzymatic activity. This is ATP phosphoribosyltransferase from Shigella flexneri serotype 5b (strain 8401).